The following is a 459-amino-acid chain: tRNA modification GTPase MnmE (459 aa).

The (6S)-5-formyl-5,6,7,8-tetrahydrofolate site is built by Arg-25, Glu-87, and Arg-126. In terms of domain architecture, TrmE-type G spans 221–380 (GLKVAIVGRP…LETAILEIVQ (160 aa)). Asn-231 serves as a coordination point for K(+). GTP-binding positions include 231–236 (NVGKSS), 250–256 (TDLPGTT), and 275–278 (DTAG). Ser-235 is a binding site for Mg(2+). 3 residues coordinate K(+): Thr-250, Leu-252, and Thr-255. Thr-256 is a Mg(2+) binding site. Lys-459 contacts (6S)-5-formyl-5,6,7,8-tetrahydrofolate.

This sequence belongs to the TRAFAC class TrmE-Era-EngA-EngB-Septin-like GTPase superfamily. TrmE GTPase family. As to quaternary structure, homodimer. Heterotetramer of two MnmE and two MnmG subunits. K(+) is required as a cofactor.

Its subcellular location is the cytoplasm. Its function is as follows. Exhibits a very high intrinsic GTPase hydrolysis rate. Involved in the addition of a carboxymethylaminomethyl (cmnm) group at the wobble position (U34) of certain tRNAs, forming tRNA-cmnm(5)s(2)U34. This is tRNA modification GTPase MnmE from Nostoc sp. (strain PCC 7120 / SAG 25.82 / UTEX 2576).